The sequence spans 301 residues: 5'-3' exonuclease (301 aa).

In terms of domain architecture, 5'-3' exonuclease spans Gly-182–Asp-264.

Its function is as follows. 5'-3' exonuclease acting preferentially on double-stranded DNA. The chain is 5'-3' exonuclease from Streptomyces coelicolor (strain ATCC BAA-471 / A3(2) / M145).